A 494-amino-acid polypeptide reads, in one-letter code: GTPase Der (494 aa).

EngA-type G domains lie at 2–164 and 235–407; these read KKIA…PEED and IKIS…KNYS. GTP contacts are provided by residues 8 to 15, 55 to 59, 116 to 119, 241 to 248, 288 to 292, and 352 to 355; these read GRPNVGKS, DTGGL, NKID, GRTNVGKS, DTAGL, and NKWD. The KH-like domain occupies 408–492; the sequence is QHIKTSELNV…PVLFKAKKRG (85 aa).

It belongs to the TRAFAC class TrmE-Era-EngA-EngB-Septin-like GTPase superfamily. EngA (Der) GTPase family. As to quaternary structure, associates with the 50S ribosomal subunit.

Its function is as follows. GTPase that plays an essential role in the late steps of ribosome biogenesis. This is GTPase Der from Sulfurimonas denitrificans (strain ATCC 33889 / DSM 1251) (Thiomicrospira denitrificans (strain ATCC 33889 / DSM 1251)).